Reading from the N-terminus, the 360-residue chain is Luc7-like protein (360 aa).

Positions 143–206 (KEQNSKITEL…QEKNENKRMS (64 aa)) form a coiled coil. Residues 255 to 360 (LGRTDFYNAP…DDRRKRDRNY (106 aa)) are disordered. The span at 269 to 293 (DSYRDDRRSSSSSYHDIDGRRDHRY) shows a compositional bias: basic and acidic residues. The span at 312-321 (NNGRGSSRDN) shows a compositional bias: low complexity. Over residues 329-360 (RDYRNDHGKDYDRKRERDYYNDDDRRKRDRNY) the composition is skewed to basic and acidic residues.

The protein belongs to the Luc7 family.

The protein resides in the nucleus. May play a role in RNA splicing. The polypeptide is Luc7-like protein (crop) (Dictyostelium discoideum (Social amoeba)).